The chain runs to 229 residues: Ribonuclease HII (229 aa).

In terms of domain architecture, RNase H type-2 spans 34-223 (WPVAGADEAG…LRKTENGPET (190 aa)). A divalent metal cation-binding residues include Asp40, Glu41, and Asp131. The disordered stretch occupies residues 209-229 (MSFRPLRKTENGPETDELLSE).

Belongs to the RNase HII family. It depends on Mn(2+) as a cofactor. The cofactor is Mg(2+).

The protein localises to the cytoplasm. The enzyme catalyses Endonucleolytic cleavage to 5'-phosphomonoester.. Functionally, endonuclease that specifically degrades the RNA of RNA-DNA hybrids. The protein is Ribonuclease HII of Rhizobium johnstonii (strain DSM 114642 / LMG 32736 / 3841) (Rhizobium leguminosarum bv. viciae).